The sequence spans 368 residues: Alanine racemase (368 aa).

Residue Lys40 is the Proton acceptor; specific for D-alanine of the active site. Lys40 bears the N6-(pyridoxal phosphate)lysine mark. Arg134 contributes to the substrate binding site. Tyr263 (proton acceptor; specific for L-alanine) is an active-site residue. Met310 is a binding site for substrate.

The protein belongs to the alanine racemase family. The cofactor is pyridoxal 5'-phosphate.

It catalyses the reaction L-alanine = D-alanine. Its pathway is amino-acid biosynthesis; D-alanine biosynthesis; D-alanine from L-alanine: step 1/1. Its function is as follows. Catalyzes the interconversion of L-alanine and D-alanine. May also act on other amino acids. The polypeptide is Alanine racemase (alr) (Listeria monocytogenes serotype 4b (strain CLIP80459)).